The chain runs to 1193 residues: DNA polymerase (1193 aa).

The interval 1 to 88 (MALVQTHGSR…PAKKKRGTVV (88 aa)) is disordered. Residues 48-68 (PATTASGSRAAPTARRASSPP) are compositionally biased toward low complexity.

The protein belongs to the DNA polymerase type-B family. In terms of assembly, heterodimer with the terminal protein; this heterodimer binds to bp 9 to 18 of the genome. Forms a complex with viral pTP, DBP and hosts NFIA and POU2F1/OCT1 for initiation of replication.

Its subcellular location is the host nucleus. The catalysed reaction is DNA(n) + a 2'-deoxyribonucleoside 5'-triphosphate = DNA(n+1) + diphosphate. Functionally, eukaryotic-type DNA polymerase involved in viral genomic replication. DNA synthesis is protein primed, and acts in a strand displacement replication. Assembles in complex with viral pTP, DBP, host NFIA and host POU2F1/OCT1 on viral origin of replication. The polymerase covalently transfers dCMP onto pTP, thereby initiating complementary strand synthesis. This chain is DNA polymerase, found in Homo sapiens (Human).